The chain runs to 410 residues: Phosphoglycerate kinase (410 aa).

Substrate contacts are provided by residues 19–21, Arg34, 57–60, Arg114, and Arg154; these read DLN and HQGK. Residues Glu332 and 358–361 each bind ATP; that span reads GGHS.

The protein belongs to the phosphoglycerate kinase family. Homodimer.

The protein resides in the cytoplasm. It carries out the reaction (2R)-3-phosphoglycerate + ATP = (2R)-3-phospho-glyceroyl phosphate + ADP. The protein operates within carbohydrate degradation; glycolysis; pyruvate from D-glyceraldehyde 3-phosphate: step 2/5. The chain is Phosphoglycerate kinase (pgk) from Pyrococcus horikoshii (strain ATCC 700860 / DSM 12428 / JCM 9974 / NBRC 100139 / OT-3).